The primary structure comprises 488 residues: ATP synthase subunit beta (488 aa).

164–171 contributes to the ATP binding site; that stretch reads GGAGMGKT.

Belongs to the ATPase alpha/beta chains family. As to quaternary structure, F-type ATPases have 2 components, CF(1) - the catalytic core - and CF(0) - the membrane proton channel. CF(1) has five subunits: alpha(3), beta(3), gamma(1), delta(1), epsilon(1). CF(0) has four main subunits: a(1), b(1), b'(1) and c(9-12).

It is found in the cellular thylakoid membrane. It carries out the reaction ATP + H2O + 4 H(+)(in) = ADP + phosphate + 5 H(+)(out). Produces ATP from ADP in the presence of a proton gradient across the membrane. The catalytic sites are hosted primarily by the beta subunits. This chain is ATP synthase subunit beta, found in Synechococcus sp. (strain RCC307).